A 358-amino-acid chain; its full sequence is Phospho-N-acetylmuramoyl-pentapeptide-transferase (358 aa).

Helical transmembrane passes span 26-46 (AIYATITALMIAFILGPWLID), 70-90 (GTPTMGGTLILLAIVLPTLLW), 94-114 (TNVYVWVTLLVTVGFGAVGFV), 134-154 (MLWLMLIAGTAGVMLYSYPPF), 169-189 (ELGLFYIPFAVLVIVGASNAV), 197-217 (GLAIGPTIIASGTYLLFAYLA), 234-254 (AGELAVLCGAMVGAGLGFLWF), 261-281 (VFMGDVGSLSLGGALGTIAVI), 286-306 (IVLVIVGGIFVVEALSVIVQV), and 335-355 (KIIVRFWIISIILALVALSTL).

The protein belongs to the glycosyltransferase 4 family. MraY subfamily. It depends on Mg(2+) as a cofactor.

Its subcellular location is the cell inner membrane. It catalyses the reaction UDP-N-acetyl-alpha-D-muramoyl-L-alanyl-gamma-D-glutamyl-meso-2,6-diaminopimeloyl-D-alanyl-D-alanine + di-trans,octa-cis-undecaprenyl phosphate = di-trans,octa-cis-undecaprenyl diphospho-N-acetyl-alpha-D-muramoyl-L-alanyl-D-glutamyl-meso-2,6-diaminopimeloyl-D-alanyl-D-alanine + UMP. Its pathway is cell wall biogenesis; peptidoglycan biosynthesis. In terms of biological role, catalyzes the initial step of the lipid cycle reactions in the biosynthesis of the cell wall peptidoglycan: transfers peptidoglycan precursor phospho-MurNAc-pentapeptide from UDP-MurNAc-pentapeptide onto the lipid carrier undecaprenyl phosphate, yielding undecaprenyl-pyrophosphoryl-MurNAc-pentapeptide, known as lipid I. The protein is Phospho-N-acetylmuramoyl-pentapeptide-transferase of Syntrophotalea carbinolica (strain DSM 2380 / NBRC 103641 / GraBd1) (Pelobacter carbinolicus).